The chain runs to 250 residues: 2,3-bisphosphoglycerate-dependent phosphoglycerate mutase (250 aa).

Substrate is bound by residues 10-17, 23-24, arginine 62, 89-92, lysine 100, 116-117, and 185-186; these read RHGESEWN, TG, ERHY, RR, and GN. Histidine 11 functions as the Tele-phosphohistidine intermediate in the catalytic mechanism. Glutamate 89 (proton donor/acceptor) is an active-site residue.

It belongs to the phosphoglycerate mutase family. BPG-dependent PGAM subfamily. Homodimer.

It carries out the reaction (2R)-2-phosphoglycerate = (2R)-3-phosphoglycerate. It participates in carbohydrate degradation; glycolysis; pyruvate from D-glyceraldehyde 3-phosphate: step 3/5. Catalyzes the interconversion of 2-phosphoglycerate and 3-phosphoglycerate. This is 2,3-bisphosphoglycerate-dependent phosphoglycerate mutase from Edwardsiella ictaluri (strain 93-146).